The sequence spans 600 residues: Probable methyltransferase PMT21 (600 aa).

Topologically, residues 1-16 (MKYKDEKYEKAEKGSR) are cytoplasmic. A helical; Signal-anchor for type II membrane protein transmembrane segment spans residues 17-37 (ILPKTVLLILLCGLSFYLGGL). At 38–600 (YCGKNIIEVS…YSSNASSETN (563 aa)) the chain is on the lumenal side. Asparagine 594 is a glycosylation site (N-linked (GlcNAc...) asparagine).

It belongs to the methyltransferase superfamily.

Its subcellular location is the endoplasmic reticulum membrane. This is Probable methyltransferase PMT21 (ERD3) from Arabidopsis thaliana (Mouse-ear cress).